We begin with the raw amino-acid sequence, 161 residues long: Troponin C, slow skeletal and cardiac muscles (161 aa).

N-acetylmethionine is present on methionine 1. 4 consecutive EF-hand domains span residues 16 to 51 (QKNEFKAAFDIFVLGAEDGCISTKELGKVMRMLGQN), 52 to 87 (PTPEELQEMIDEVDEDGSGTVDFDEFLVMMVRCMKD), 92 to 127 (KTEEELSDLFRMFDKNADGYIDLEELKIMLQATGET), and 128 to 161 (ITEDDIEELMKDGDKNNDGRIDYDEFLEFMKGVE). Ca(2+)-binding residues include aspartate 65, aspartate 67, serine 69, threonine 71, glutamate 76, aspartate 105, asparagine 107, aspartate 109, tyrosine 111, glutamate 116, aspartate 141, asparagine 143, aspartate 145, arginine 147, and glutamate 152.

Belongs to the troponin C family.

Functionally, troponin is the central regulatory protein of striated muscle contraction. Tn consists of three components: Tn-I which is the inhibitor of actomyosin ATPase, Tn-T which contains the binding site for tropomyosin and Tn-C. The binding of calcium to Tn-C abolishes the inhibitory action of Tn on actin filaments. This Gallus gallus (Chicken) protein is Troponin C, slow skeletal and cardiac muscles (TNNC1).